The primary structure comprises 291 residues: 4-diphosphocytidyl-2-C-methyl-D-erythritol kinase (291 aa).

Lys11 is an active-site residue. Residue 97–107 (PVAAGIGGGSS) coordinates ATP. The active site involves Asp139.

This sequence belongs to the GHMP kinase family. IspE subfamily.

The enzyme catalyses 4-CDP-2-C-methyl-D-erythritol + ATP = 4-CDP-2-C-methyl-D-erythritol 2-phosphate + ADP + H(+). It participates in isoprenoid biosynthesis; isopentenyl diphosphate biosynthesis via DXP pathway; isopentenyl diphosphate from 1-deoxy-D-xylulose 5-phosphate: step 3/6. Its function is as follows. Catalyzes the phosphorylation of the position 2 hydroxy group of 4-diphosphocytidyl-2C-methyl-D-erythritol. The chain is 4-diphosphocytidyl-2-C-methyl-D-erythritol kinase from Methylorubrum extorquens (strain PA1) (Methylobacterium extorquens).